The chain runs to 235 residues: MRFGILVFPGTNCEMETFYVLREVVGVQADYVWHEARDLTPYDAVVIPGGFTYGDRVRSGALACRAPVMEAVAEFAARGGLVLGICNGFQILTEAGLLPGGFRPNAHGRYRCGWSRVRVENAATPFTLACRPGQVLKIPVSHGMGNYQADPDTLRALSENQQVLFRYCTPEGAVTPGANPNGSAENIAGIVNRTGNVAGVMPHPERATEQVLGSADGRLLFASMVQHLTGRVIRV.

The 231-residue stretch at 4 to 234 folds into the Glutamine amidotransferase type-1 domain; it reads GILVFPGTNC…VQHLTGRVIR (231 aa). C86 acts as the Nucleophile in catalysis. Catalysis depends on residues H203 and E205.

As to quaternary structure, part of the FGAM synthase complex composed of 1 PurL, 1 PurQ and 2 PurS subunits.

Its subcellular location is the cytoplasm. The catalysed reaction is N(2)-formyl-N(1)-(5-phospho-beta-D-ribosyl)glycinamide + L-glutamine + ATP + H2O = 2-formamido-N(1)-(5-O-phospho-beta-D-ribosyl)acetamidine + L-glutamate + ADP + phosphate + H(+). The enzyme catalyses L-glutamine + H2O = L-glutamate + NH4(+). The protein operates within purine metabolism; IMP biosynthesis via de novo pathway; 5-amino-1-(5-phospho-D-ribosyl)imidazole from N(2)-formyl-N(1)-(5-phospho-D-ribosyl)glycinamide: step 1/2. Its function is as follows. Part of the phosphoribosylformylglycinamidine synthase complex involved in the purines biosynthetic pathway. Catalyzes the ATP-dependent conversion of formylglycinamide ribonucleotide (FGAR) and glutamine to yield formylglycinamidine ribonucleotide (FGAM) and glutamate. The FGAM synthase complex is composed of three subunits. PurQ produces an ammonia molecule by converting glutamine to glutamate. PurL transfers the ammonia molecule to FGAR to form FGAM in an ATP-dependent manner. PurS interacts with PurQ and PurL and is thought to assist in the transfer of the ammonia molecule from PurQ to PurL. In Symbiobacterium thermophilum (strain DSM 24528 / JCM 14929 / IAM 14863 / T), this protein is Phosphoribosylformylglycinamidine synthase subunit PurQ.